Here is a 410-residue protein sequence, read N- to C-terminus: Putative transposase Rv3428c (410 aa).

Residues 40–220 enclose the Integrase catalytic domain; the sequence is VPRGPVDAGS…QPLRMFEAVE (181 aa). A disordered region spans residues 390–410; it reads AANEPTTSSPASTAGGVPARP.

It belongs to the transposase IS21/IS408/IS1162 family.

This Mycobacterium tuberculosis (strain ATCC 25618 / H37Rv) protein is Putative transposase Rv3428c.